The sequence spans 330 residues: uncharacterized protein (330 aa).

The JmjC domain maps to 96-256 (AALEFDFTDL…LMLAALRKKL (161 aa)). Positions 145, 147, and 224 each coordinate Fe cation.

It belongs to the ROX family. Requires Fe(2+) as cofactor.

This is an uncharacterized protein from Bacillus subtilis (strain 168).